A 115-amino-acid polypeptide reads, in one-letter code: Cell division protein FtsL (115 aa).

The Cytoplasmic segment spans residues 1-25; it reads MNTATRVIVAQNVRTRNRTFQITKQ. The chain crosses the membrane as a helical span at residues 26–46; it reads GVVIVALVIALLCSAFGVVYF. The Periplasmic segment spans residues 47–115; that stretch reads KDLNRRLFIQ…ILVNADAMIE (69 aa).

This sequence belongs to the FtsL family. As to quaternary structure, part of a complex composed of FtsB, FtsL and FtsQ.

The protein localises to the cell inner membrane. Functionally, essential cell division protein. May link together the upstream cell division proteins, which are predominantly cytoplasmic, with the downstream cell division proteins, which are predominantly periplasmic. The protein is Cell division protein FtsL of Coxiella burnetii (strain RSA 493 / Nine Mile phase I).